A 410-amino-acid polypeptide reads, in one-letter code: Multifunctional CCA protein (410 aa).

Residues Gly-8 and Arg-11 each coordinate ATP. CTP contacts are provided by Gly-8 and Arg-11. Positions 21 and 23 each coordinate Mg(2+). Arg-91, Arg-137, and Arg-140 together coordinate ATP. CTP-binding residues include Arg-91, Arg-137, and Arg-140. The HD domain maps to 228-329 (TGIHVMMALR…LKLFDRLDVW (102 aa)).

This sequence belongs to the tRNA nucleotidyltransferase/poly(A) polymerase family. Bacterial CCA-adding enzyme type 1 subfamily. In terms of assembly, monomer. Can also form homodimers and oligomers. Mg(2+) serves as cofactor. Requires Ni(2+) as cofactor.

The enzyme catalyses a tRNA precursor + 2 CTP + ATP = a tRNA with a 3' CCA end + 3 diphosphate. The catalysed reaction is a tRNA with a 3' CCA end + 2 CTP + ATP = a tRNA with a 3' CCACCA end + 3 diphosphate. In terms of biological role, catalyzes the addition and repair of the essential 3'-terminal CCA sequence in tRNAs without using a nucleic acid template. Adds these three nucleotides in the order of C, C, and A to the tRNA nucleotide-73, using CTP and ATP as substrates and producing inorganic pyrophosphate. tRNA 3'-terminal CCA addition is required both for tRNA processing and repair. Also involved in tRNA surveillance by mediating tandem CCA addition to generate a CCACCA at the 3' terminus of unstable tRNAs. While stable tRNAs receive only 3'-terminal CCA, unstable tRNAs are marked with CCACCA and rapidly degraded. This chain is Multifunctional CCA protein, found in Tolumonas auensis (strain DSM 9187 / NBRC 110442 / TA 4).